A 968-amino-acid polypeptide reads, in one-letter code: Phosphoenolpyruvate carboxylase (968 aa).

At S11 the chain carries Phosphoserine. Residues H172 and K602 contribute to the active site.

The protein belongs to the PEPCase type 1 family. Homotetramer. The cofactor is Mg(2+).

It is found in the cytoplasm. The enzyme catalyses oxaloacetate + phosphate = phosphoenolpyruvate + hydrogencarbonate. By light-reversible phosphorylation. Functionally, through the carboxylation of phosphoenolpyruvate (PEP) it forms oxaloacetate, a four-carbon dicarboxylic acid source for the tricarboxylic acid cycle. The protein is Phosphoenolpyruvate carboxylase of Phaseolus vulgaris (Kidney bean).